The chain runs to 452 residues: 51.5 kDa protein (452 aa).

Residues 1–126 form the Helicase ATP-binding domain; the sequence is MIQSPPGSGK…KDTYDYMIEG (126 aa). Residues 177-333 form the Helicase C-terminal domain; sequence DVVQEYVKHA…NIVQAKQCPD (157 aa). Residues 331–348 fold into a zinc finger; it reads CPDCSAMWPLSQKMCNLC.

Functionally, may play a role in either regulating bacteriophages replication or specifying expression of its own genes. In Lactococcus (lactic streptococci), this protein is 51.5 kDa protein.